We begin with the raw amino-acid sequence, 131 residues long: Small ribosomal subunit protein uS12 (131 aa).

Position 89 is a 3-methylthioaspartic acid (aspartate 89).

This sequence belongs to the universal ribosomal protein uS12 family. Part of the 30S ribosomal subunit. Contacts proteins S8 and S17. May interact with IF1 in the 30S initiation complex.

With S4 and S5 plays an important role in translational accuracy. In terms of biological role, interacts with and stabilizes bases of the 16S rRNA that are involved in tRNA selection in the A site and with the mRNA backbone. Located at the interface of the 30S and 50S subunits, it traverses the body of the 30S subunit contacting proteins on the other side and probably holding the rRNA structure together. The combined cluster of proteins S8, S12 and S17 appears to hold together the shoulder and platform of the 30S subunit. The protein is Small ribosomal subunit protein uS12 of Karelsulcia muelleri (strain GWSS) (Sulcia muelleri).